A 313-amino-acid chain; its full sequence is tRNA (guanine-N(7)-)-methyltransferase (313 aa).

Residues Glu33, Glu58, and Asp85 each coordinate S-adenosyl-L-methionine. Substrate contacts are provided by residues Lys112, Asp144, and Thr177–Glu180.

Belongs to the class I-like SAM-binding methyltransferase superfamily. TrmB family.

The catalysed reaction is guanosine(46) in tRNA + S-adenosyl-L-methionine = N(7)-methylguanosine(46) in tRNA + S-adenosyl-L-homocysteine. It functions in the pathway tRNA modification; N(7)-methylguanine-tRNA biosynthesis. In terms of biological role, catalyzes the formation of N(7)-methylguanine at position 46 (m7G46) in tRNA. The protein is tRNA (guanine-N(7)-)-methyltransferase of Thermotoga maritima (strain ATCC 43589 / DSM 3109 / JCM 10099 / NBRC 100826 / MSB8).